The sequence spans 504 residues: tRNA (uracil-5-)-methyltransferase homolog B (504 aa).

Residues 1–16 (MAGLKRRVPLHSLRYF) constitute a mitochondrion transit peptide. 3 residues coordinate S-adenosyl-L-methionine: glutamine 323, glutamate 373, and asparagine 423. Catalysis depends on cysteine 451, which acts as the Nucleophile. Glutamate 497 (proton acceptor) is an active-site residue.

Belongs to the class I-like SAM-binding methyltransferase superfamily. RNA M5U methyltransferase family.

The protein localises to the mitochondrion. The protein resides in the mitochondrion matrix. It catalyses the reaction uridine(54) in tRNA + S-adenosyl-L-methionine = 5-methyluridine(54) in tRNA + S-adenosyl-L-homocysteine + H(+). It carries out the reaction a uridine in 12S rRNA + S-adenosyl-L-methionine = a 5-methyluridine in 12S rRNA + S-adenosyl-L-homocysteine + H(+). Functionally, mitochondrial S-adenosyl-L-methionine-dependent methyltransferase that catalyzes the formation of 5-methyl-uridine in tRNAs and 12S rRNA. Catalyzes the methylation of uridine at position 54 (m5U54) in all tRNAs. Specifically methylates the uridine in position 429 of 12S rRNA (m5U429). Does not affect RNA stability or mitochondrial translation. This Homo sapiens (Human) protein is tRNA (uracil-5-)-methyltransferase homolog B.